The primary structure comprises 292 residues: Glycine--tRNA ligase alpha subunit (292 aa).

The protein belongs to the class-II aminoacyl-tRNA synthetase family. Tetramer of two alpha and two beta subunits.

It localises to the cytoplasm. The enzyme catalyses tRNA(Gly) + glycine + ATP = glycyl-tRNA(Gly) + AMP + diphosphate. In Pelobacter propionicus (strain DSM 2379 / NBRC 103807 / OttBd1), this protein is Glycine--tRNA ligase alpha subunit.